The sequence spans 202 residues: Probable WRKY transcription factor 59 (202 aa).

Residues 103-168 constitute a DNA-binding region (WRKY); that stretch reads DEKVALDDGY…YEGRHNHPSP (66 aa).

This sequence belongs to the WRKY group II-c family.

The protein localises to the nucleus. Its function is as follows. Transcription factor. Interacts specifically with the W box (5'-(T)TGAC[CT]-3'), a frequently occurring elicitor-responsive cis-acting element. The protein is Probable WRKY transcription factor 59 (WRKY59) of Arabidopsis thaliana (Mouse-ear cress).